The following is a 270-amino-acid chain: Phthiotriol/phenolphthiotriol dimycocerosates methyltransferase (270 aa).

Belongs to the methyltransferase superfamily. Phthiotriol/phenolphthiotriol dimycocerosates methyltransferase family.

In terms of biological role, catalyzes the methylation of the lipid moiety of the intermediate compounds phthiotriol and glycosylated phenolphthiotriol dimycoserosates to form phthiocerol dimycocerosates (DIM A) and glycosylated phenolphthiocerol dimycocerosates (PGL). This is Phthiotriol/phenolphthiotriol dimycocerosates methyltransferase from Mycobacterium leprae (strain TN).